The primary structure comprises 1401 residues: DNA-directed RNA polymerase subunit beta' (1401 aa).

Positions 71, 73, 86, and 89 each coordinate Zn(2+). Positions 462, 464, and 466 each coordinate Mg(2+). Cys-810, Cys-884, Cys-891, and Cys-894 together coordinate Zn(2+). Residues 1377-1401 are disordered; sequence RRKGTGAESATPMLADMANDPAAAE.

It belongs to the RNA polymerase beta' chain family. In terms of assembly, the RNAP catalytic core consists of 2 alpha, 1 beta, 1 beta' and 1 omega subunit. When a sigma factor is associated with the core the holoenzyme is formed, which can initiate transcription. Requires Mg(2+) as cofactor. The cofactor is Zn(2+).

The enzyme catalyses RNA(n) + a ribonucleoside 5'-triphosphate = RNA(n+1) + diphosphate. Functionally, DNA-dependent RNA polymerase catalyzes the transcription of DNA into RNA using the four ribonucleoside triphosphates as substrates. The sequence is that of DNA-directed RNA polymerase subunit beta' from Rhizobium meliloti (strain 1021) (Ensifer meliloti).